A 574-amino-acid polypeptide reads, in one-letter code: Alpha-farnesene synthase (574 aa).

Positions 326, 330, and 478 each coordinate Mn(2+). Positions 326–330 (DDIYD) match the DDXXD motif motif.

This sequence belongs to the terpene synthase family. Tpsd subfamily. Mn(2+) is required as a cofactor.

It is found in the cytoplasm. The enzyme catalyses (2E,6E)-farnesyl diphosphate = (3E,6E)-alpha-farnesene + diphosphate. Its pathway is terpene metabolism; oleoresin biosynthesis. Its function is as follows. Involved in sesquiterpene (C15) biosynthesis. The major product is alpha-farnesene. The sequence is that of Alpha-farnesene synthase (PT5) from Pinus taeda (Loblolly pine).